The primary structure comprises 170 residues: Adenine phosphoribosyltransferase (170 aa).

This sequence belongs to the purine/pyrimidine phosphoribosyltransferase family. Homodimer.

Its subcellular location is the cytoplasm. It catalyses the reaction AMP + diphosphate = 5-phospho-alpha-D-ribose 1-diphosphate + adenine. It functions in the pathway purine metabolism; AMP biosynthesis via salvage pathway; AMP from adenine: step 1/1. In terms of biological role, catalyzes a salvage reaction resulting in the formation of AMP, that is energically less costly than de novo synthesis. This is Adenine phosphoribosyltransferase from Flavobacterium johnsoniae (strain ATCC 17061 / DSM 2064 / JCM 8514 / BCRC 14874 / CCUG 350202 / NBRC 14942 / NCIMB 11054 / UW101) (Cytophaga johnsonae).